Reading from the N-terminus, the 154-residue chain is 6,7-dimethyl-8-ribityllumazine synthase (154 aa).

5-amino-6-(D-ribitylamino)uracil is bound by residues Phe22, 56–58 (AFE), and 80–82 (AVI). 85–86 (ST) provides a ligand contact to (2S)-2-hydroxy-3-oxobutyl phosphate. The Proton donor role is filled by His88. Phe113 lines the 5-amino-6-(D-ribitylamino)uracil pocket. (2S)-2-hydroxy-3-oxobutyl phosphate is bound at residue Arg127.

Belongs to the DMRL synthase family.

The catalysed reaction is (2S)-2-hydroxy-3-oxobutyl phosphate + 5-amino-6-(D-ribitylamino)uracil = 6,7-dimethyl-8-(1-D-ribityl)lumazine + phosphate + 2 H2O + H(+). Its pathway is cofactor biosynthesis; riboflavin biosynthesis; riboflavin from 2-hydroxy-3-oxobutyl phosphate and 5-amino-6-(D-ribitylamino)uracil: step 1/2. Catalyzes the formation of 6,7-dimethyl-8-ribityllumazine by condensation of 5-amino-6-(D-ribitylamino)uracil with 3,4-dihydroxy-2-butanone 4-phosphate. This is the penultimate step in the biosynthesis of riboflavin. This is 6,7-dimethyl-8-ribityllumazine synthase from Clostridium beijerinckii (strain ATCC 51743 / NCIMB 8052) (Clostridium acetobutylicum).